Consider the following 312-residue polypeptide: Tetraspanin-17 (312 aa).

Helical transmembrane passes span 17 to 37 (IFSIYYWLSALGHVFLGLWML), 64 to 84 (VSLVCGCAQLLVGFLGLCGAV), 89 to 109 (FLLLAFVMFLIGTFLADVAMG), and 274 to 294 (IWIFVGFGFGSALTMMLGICL).

The protein belongs to the tetraspanin (TM4SF) family. Expressed in dopaminergic neurons, head muscles, vulva and spermatheca.

Its subcellular location is the cell membrane. It localises to the cell projection. The protein localises to the dendrite. It is found in the axon. Its function is as follows. Protects dopaminergic neurons against oxidative stress-induced neurodegeneration. May act partly via dopamine receptor dop-2 to negatively regulate dopamine reuptake transporter dat-1 activity. Also plays a role in modulating behaviors linked to dopamine signaling. Confers protection against oxidative stress in the whole body. In Caenorhabditis elegans, this protein is Tetraspanin-17.